Consider the following 184-residue polypeptide: Chromobox protein homolog hpl-1 (184 aa).

Positions 1–13 are enriched in polar residues; it reads MSRQNPVRSTRGN. 2 disordered regions span residues 1–27 and 87–115; these read MSRQ…QDAP and AAKR…STSD. A Chromo domain is found at 37-95; sequence FVVEKVLNKRLTRGGSEYYIKWQGFPESECSWEPIENLQCDRMIQEYEKEAAKRTTRKR. The segment covering 99–115 has biased composition (polar residues); that stretch reads PQPSTSSSAELQPSTSD.

In terms of assembly, interacts with histone demethylase spr-5. Interacts with chromobox protein homolog hpl-2. Interacts with histone H3 tails methylated at 'Lys-9' (H3K9me3) and 'Lys-23'(H3K23me2). Interacts with histone H1 variant his-24 (when monomethylated at 'Lys-14'); the interaction is direct. May interact with the REST corepressor rcor-1, histone deacetylase hda-1, and the histone demethylase lsd-1.

Its subcellular location is the nucleus. Its function is as follows. Seems to be involved in transcriptional silencing in heterochromatin-like complexes. Involved in epigenetic repression. Probably does not act as global transcriptional repressor. Plays a role in linking epigenetic regulation with the innate immune response. Acting in concert with chromobox protein homolog hpl-2 and histone H1 protein his-24, involved in reproduction, somatic gonad development, male tail development and vulval cell fate decisions; perhaps as a result of modulating expression of Hox genes mab-5 and egl-5. Role in growth and somatic gonad development is antagonized by histone-lysine N-methyltransferase set-2/SET1. Required for larval development, acting redundantly with hpl-2. Plays a role in the formation of the vulva and in fertility, acting together with a CoREST-like complex, and hpl-2. The polypeptide is Chromobox protein homolog hpl-1 (Caenorhabditis elegans).